The following is a 577-amino-acid chain: Signal peptide peptidase-like 2B (577 aa).

Positions 1-19 (MAAARLAASLLLLAAQVAC) are cleaved as a signal peptide. The Lumenal segment spans residues 20–168 (EFGVLRVVPQ…APSEPVMDYN (149 aa)). The region spanning 49–149 (LPHDLNKVSL…RDLQDIFRRF (101 aa)) is the PA domain. Asparagine 91 is a glycosylation site (N-linked (GlcNAc...) asparagine). The chain crosses the membrane as a helical span at residues 169–189 (MVIIFIMAVGTVALGGYWAGS). Residues 190–216 (HDVKKYMKHKRDDVPEKQEDEAVDVTP) lie on the Cytoplasmic side of the membrane. The helical transmembrane segment at 217-237 (VMICVFVVMCCFMLVLLYYFY) threads the bilayer. The Lumenal segment spans residues 238-239 (DR). A helical membrane pass occupies residues 240 to 260 (LVYVIIGIFCLASSTGLYSCL). Over 261 to 286 (APCVRKLPFCTCRVPDNNLPYFHKRP) the chain is Cytoplasmic. The chain crosses the membrane as a helical span at residues 287–307 (QARMLLLALFCVTVSVVWGVF). Residues 308-312 (RNEDQ) are Lumenal-facing. Residues 313–333 (WAWVLQDTLGIAFCLYMLRTI) traverse the membrane as a helical segment. Topologically, residues 334-341 (RLPTFKAC) are cytoplasmic. Residues 342 to 362 (TLLLLVLFVYDIFFVFITPYL) traverse the membrane as a helical segment. The active site involves aspartate 352. The Lumenal segment spans residues 363–405 (TKSGNSIMVEVATGPSNSSTHEKLPMVLKVPRLNTSPLSLCDR). A helical membrane pass occupies residues 406-426 (PFSLLGFGDILVPGLLVAYCH). Residue aspartate 414 is part of the active site. Over 427–438 (RFDIQVQSSRIY) the chain is Cytoplasmic. Residues 439–459 (FVACTIAYGLGLLVTFVALVL) form a helical membrane-spanning segment. Over 460-463 (MRHG) the chain is Lumenal. The chain crosses the membrane as a helical span at residues 464–484 (QPALLYLVPCTLLTSCTVALW). The short motif at 465-467 (PAL) is the PAL element. Topologically, residues 485-577 (RREMGAFWTG…IPVVTPGTSA (93 aa)) are cytoplasmic. Residues 502-577 (QTPWAAPQGP…IPVVTPGTSA (76 aa)) are disordered.

It belongs to the peptidase A22B family. As to quaternary structure, monomer. Homodimer. Interacts with ITM2B and TNF. Post-translationally, glycosylated.

The protein resides in the cell membrane. Its subcellular location is the golgi apparatus membrane. It localises to the lysosome membrane. It is found in the endosome membrane. The protein localises to the membrane. Intramembrane-cleaving aspartic protease (I-CLiP) that cleaves type II membrane signal peptides in the hydrophobic plane of the membrane. Functions in ITM2B and TNF processing. Catalyzes the intramembrane cleavage of the anchored fragment of shed TNF-alpha (TNF), which promotes the release of the intracellular domain (ICD) for signaling to the nucleus. May play a role in the regulation of innate and adaptive immunity. The sequence is that of Signal peptide peptidase-like 2B from Rattus norvegicus (Rat).